We begin with the raw amino-acid sequence, 92 residues long: RNA-binding protein Hfq (92 aa).

Positions Asp9 to Val68 constitute a Sm domain. A compositionally biased stretch (polar residues) spans Ser69–Ala81. Residues Ser69–Glu92 are disordered.

The protein belongs to the Hfq family. In terms of assembly, homohexamer.

In terms of biological role, RNA chaperone that binds small regulatory RNA (sRNAs) and mRNAs to facilitate mRNA translational regulation in response to envelope stress, environmental stress and changes in metabolite concentrations. Also binds with high specificity to tRNAs. The polypeptide is RNA-binding protein Hfq (Actinobacillus pleuropneumoniae serotype 5b (strain L20)).